The sequence spans 240 residues: Ribonuclease PH (240 aa).

Phosphate contacts are provided by residues arginine 86 and 124 to 126 (GTR).

This sequence belongs to the RNase PH family. Homohexameric ring arranged as a trimer of dimers.

It catalyses the reaction tRNA(n+1) + phosphate = tRNA(n) + a ribonucleoside 5'-diphosphate. Functionally, phosphorolytic 3'-5' exoribonuclease that plays an important role in tRNA 3'-end maturation. Removes nucleotide residues following the 3'-CCA terminus of tRNAs; can also add nucleotides to the ends of RNA molecules by using nucleoside diphosphates as substrates, but this may not be physiologically important. Probably plays a role in initiation of 16S rRNA degradation (leading to ribosome degradation) during starvation. The protein is Ribonuclease PH of Rhodospirillum rubrum (strain ATCC 11170 / ATH 1.1.1 / DSM 467 / LMG 4362 / NCIMB 8255 / S1).